The following is a 195-amino-acid chain: Guanylate kinase (195 aa).

Positions 7–186 (GVLLVLSSPS…SVEEISSILD (180 aa)) constitute a Guanylate kinase-like domain. 14-21 (SPSGAGKT) provides a ligand contact to ATP.

It belongs to the guanylate kinase family.

It is found in the cytoplasm. It catalyses the reaction GMP + ATP = GDP + ADP. In terms of biological role, essential for recycling GMP and indirectly, cGMP. This chain is Guanylate kinase, found in Wolbachia sp. subsp. Brugia malayi (strain TRS).